The sequence spans 59 residues: MDVKRVKQILSSSSRIDVTYEGVPVWIESCDEQSGVAQVYDVSNPGESVHVNVTALEEK.

This sequence belongs to the SspH family.

It is found in the spore core. The sequence is that of Small, acid-soluble spore protein H from Bacillus thuringiensis subsp. konkukian (strain 97-27).